Reading from the N-terminus, the 592-residue chain is Beta-fructofuranosidase, insoluble isoenzyme 2 (592 aa).

The first 40 residues, 1 to 40 (MLIRCFHIKMALVTCFHSMLFLSAVVFIFSLDVNIRGVEA), serve as a signal peptide directing secretion. Aspartate 75 is an active-site residue. N-linked (GlcNAc...) asparagine glycans are attached at residues asparagine 171, asparagine 195, asparagine 310, asparagine 347, and asparagine 568.

It belongs to the glycosyl hydrolase 32 family.

The protein localises to the secreted. The protein resides in the cell wall. It catalyses the reaction Hydrolysis of terminal non-reducing beta-D-fructofuranoside residues in beta-D-fructofuranosides.. May play an important role in phloem unloading and in stress response. This Daucus carota (Wild carrot) protein is Beta-fructofuranosidase, insoluble isoenzyme 2 (INV2).